A 407-amino-acid polypeptide reads, in one-letter code: uncharacterized protein (407 aa).

The EAL domain maps to 1–250; that stretch reads MLDPLDILTN…LERDVLKQRL (250 aa).

This is an uncharacterized protein from Bacillus subtilis (strain 168).